A 286-amino-acid chain; its full sequence is Bifunctional protein FolD (286 aa).

NADP(+)-binding positions include 165–167 (GRS), Ser190, and Val231.

The protein belongs to the tetrahydrofolate dehydrogenase/cyclohydrolase family. In terms of assembly, homodimer.

The enzyme catalyses (6R)-5,10-methylene-5,6,7,8-tetrahydrofolate + NADP(+) = (6R)-5,10-methenyltetrahydrofolate + NADPH. It catalyses the reaction (6R)-5,10-methenyltetrahydrofolate + H2O = (6R)-10-formyltetrahydrofolate + H(+). It participates in one-carbon metabolism; tetrahydrofolate interconversion. Catalyzes the oxidation of 5,10-methylenetetrahydrofolate to 5,10-methenyltetrahydrofolate and then the hydrolysis of 5,10-methenyltetrahydrofolate to 10-formyltetrahydrofolate. In Bacillus thuringiensis (strain Al Hakam), this protein is Bifunctional protein FolD.